Here is a 299-residue protein sequence, read N- to C-terminus: ATP phosphoribosyltransferase (299 aa).

Belongs to the ATP phosphoribosyltransferase family. Long subfamily. In terms of assembly, equilibrium between an active dimeric form, an inactive hexameric form and higher aggregates. Interconversion between the various forms is largely reversible and is influenced by the natural substrates and inhibitors of the enzyme. Requires Mg(2+) as cofactor.

It is found in the cytoplasm. It carries out the reaction 1-(5-phospho-beta-D-ribosyl)-ATP + diphosphate = 5-phospho-alpha-D-ribose 1-diphosphate + ATP. The protein operates within amino-acid biosynthesis; L-histidine biosynthesis; L-histidine from 5-phospho-alpha-D-ribose 1-diphosphate: step 1/9. Its activity is regulated as follows. Feedback inhibited by histidine. Its function is as follows. Catalyzes the condensation of ATP and 5-phosphoribose 1-diphosphate to form N'-(5'-phosphoribosyl)-ATP (PR-ATP). Has a crucial role in the pathway because the rate of histidine biosynthesis seems to be controlled primarily by regulation of HisG enzymatic activity. This Escherichia coli O157:H7 protein is ATP phosphoribosyltransferase.